The following is a 2766-amino-acid chain: PDZ domain-containing protein 2 (2766 aa).

In terms of domain architecture, PDZ 1 spans 85–177 (LSFGNIPVFG…GGFIYLIMLR (93 aa)). 2 disordered regions span residues 189–315 (GNSG…KTGK) and 419–452 (MPGS…KLKS). A compositionally biased stretch (acidic residues) spans 242–254 (TADDPNSELENGA). The segment covering 280 to 296 (HLERSEADSEVELRVPK) has biased composition (basic and acidic residues). Residues 334-419 (KMELLKESDG…MVQLVVASKM (86 aa)) form the PDZ 2 domain. Position 517 is a phosphoserine (serine 517). A PDZ 3 domain is found at 535-621 (IIGLYKEKGK…GLFVLTVRTK (87 aa)). A compositionally biased stretch (polar residues) spans 627–636 (LTPCSTPTHM). Positions 627–673 (LTPCSTPTHMSRSSSPSFNTNSGGTPAGGGQEEGGSSSLGRKAPGPK) are disordered. The span at 637–650 (SRSSSPSFNTNSGG) shows a compositional bias: low complexity. The 86-residue stretch at 679–764 (EVTLNKEPRV…GPVRLVIGRH (86 aa)) folds into the PDZ 4 domain. Residues 783-794 (YQESREANSSPG) show a composition bias toward polar residues. Disordered regions lie at residues 783–803 (YQES…KSPS) and 834–853 (AGSE…EDGS). Phosphoserine occurs at positions 891 and 895. 10 disordered regions span residues 915–966 (NGGS…KQEE), 990–1425 (HSIL…PSVL), 1456–1531 (ISLS…CPGT), 1725–1909 (DSQG…LPEQ), 1924–1967 (DTSC…IRQS), 2015–2070 (ERVP…ASQV), 2146–2174 (FSSH…AMGG), 2262–2397 (DRPT…ERRT), 2424–2450 (QLEI…GHAD), and 2465–2496 (TRAY…WATP). The span at 918–927 (SDDEDFDGEG) shows a compositional bias: acidic residues. The span at 1021–1038 (GRKEMSGSRSSPKLEYRV) shows a compositional bias: basic and acidic residues. Polar residues-rich tracts occupy residues 1040–1061 (TDTQ…SENL), 1126–1137 (PGDSSVPTNCGP), and 1189–1220 (SETP…SQGI). 2 stretches are compositionally biased toward low complexity: residues 1379–1393 (SQPP…SHHA) and 1456–1471 (ISLS…SPSS). Serine 1767 carries the post-translational modification Phosphoserine. Residues 1797–1806 (CSPKLKRLNS) show a composition bias toward basic residues. Over residues 1884-1901 (LRTSASDTSIRTFTSPLT) the composition is skewed to polar residues. Low complexity-rich tracts occupy residues 1924 to 1937 (DTSC…PRSG) and 1947 to 1963 (SGSA…ALAG). 2 stretches are compositionally biased toward low complexity: residues 2280-2296 (PPIN…GSPS) and 2305-2321 (RSLS…SSLL). Composition is skewed to polar residues over residues 2322–2347 (PQMT…SNKG) and 2362–2372 (PTSTVSPASPS). The region spanning 2550-2634 (FIVLNKKEGS…HKHALMIIKK (85 aa)) is the PDZ 5 domain. Residues 2635-2667 (GNDQPGPSFKQEPPSANGKGPFPRRTLPLEPGA) form a disordered region. In terms of domain architecture, PDZ 6 spans 2678-2763 (CVEVLKTSAG…GPVQLVIRKH (86 aa)).

In terms of assembly, interacts with SCN10A, CTNND2 and PKP4. Post-translationally, a secreted form is produced by caspase-mediated proteolytic cleavage. As to expression, expressed in the heart, liver, brain, spleen, lung, kidney, testis and skeletal muscle.

The protein localises to the nucleus. It localises to the cytoplasm. It is found in the endoplasmic reticulum. Its subcellular location is the cell junction. The protein resides in the secreted. The polypeptide is PDZ domain-containing protein 2 (Pdzd2) (Rattus norvegicus (Rat)).